A 287-amino-acid chain; its full sequence is Thiazole synthase (287 aa).

The active-site Schiff-base intermediate with DXP is the Lys-111. 1-deoxy-D-xylulose 5-phosphate contacts are provided by residues Gly-172, 203-204, and 225-226; these read AG and NT. Positions 268 to 287 are disordered; the sequence is PQEGVISTRPYGSQADEIGS.

This sequence belongs to the ThiG family. In terms of assembly, homotetramer. Forms heterodimers with either ThiH or ThiS.

It localises to the cytoplasm. It catalyses the reaction [ThiS sulfur-carrier protein]-C-terminal-Gly-aminoethanethioate + 2-iminoacetate + 1-deoxy-D-xylulose 5-phosphate = [ThiS sulfur-carrier protein]-C-terminal Gly-Gly + 2-[(2R,5Z)-2-carboxy-4-methylthiazol-5(2H)-ylidene]ethyl phosphate + 2 H2O + H(+). It participates in cofactor biosynthesis; thiamine diphosphate biosynthesis. Functionally, catalyzes the rearrangement of 1-deoxy-D-xylulose 5-phosphate (DXP) to produce the thiazole phosphate moiety of thiamine. Sulfur is provided by the thiocarboxylate moiety of the carrier protein ThiS. In vitro, sulfur can be provided by H(2)S. This is Thiazole synthase from Rhodopirellula baltica (strain DSM 10527 / NCIMB 13988 / SH1).